Here is a 635-residue protein sequence, read N- to C-terminus: Chaperone protein HtpG (635 aa).

The interval M1–R346 is a; substrate-binding. A b region spans residues E347–R563. The tract at residues M564–A635 is c.

It belongs to the heat shock protein 90 family. Homodimer.

The protein resides in the cytoplasm. Its function is as follows. Molecular chaperone. Has ATPase activity. This Bordetella pertussis (strain Tohama I / ATCC BAA-589 / NCTC 13251) protein is Chaperone protein HtpG.